Here is a 168-residue protein sequence, read N- to C-terminus: Ribosome maturation factor RimP (168 aa).

This sequence belongs to the RimP family.

It localises to the cytoplasm. Its function is as follows. Required for maturation of 30S ribosomal subunits. The protein is Ribosome maturation factor RimP of Mycoplasma mobile (strain ATCC 43663 / 163K / NCTC 11711) (Mesomycoplasma mobile).